The primary structure comprises 501 residues: MFDNILEQQRIEKAKELKNLGINPYPHFLEKEMSLKTFKDKFSYILEQVEKRDESVNAVVAGRLKLLRIAGKSIFANIEDEDTNLQIYFSKDSVGEELYTILKKNLEVGDIVLVKGFPFVTKTGEFSLHASEVKLATKAIVPLPEKYHGLTDIEQRYRKRYVDMIMNVEVRKDFLVRSKVVSLIRHFFENKGFLEVETPMMHPIAGGANAKPFVTFHNSLGVERFLRIAPELYLKRLIVGGFEAVFEINRCFRNEGMDLTHNPEFTTIEFYWAYHNYKDLMDLTEELFALLLDKLNLGKTIEFDGKMINFSKPFERITYKDALCKYGGLDRDLIEDKEKILTKLKADGFEANEKLELGHLQAELFDNYVEEKLINPTFVIDFPISISPLSRRSDEDSQIAERFELFICGRELANGFNELNDPLDQYERFLKQIEAKNAGDEEACEMDEDFVNALGYGMPPTAGQGIGIDRLVMLLTNKKSIRDVILFPAMRPLKSELKEKE.

Mg(2+) contacts are provided by glutamate 404 and glutamate 411.

The protein belongs to the class-II aminoacyl-tRNA synthetase family. As to quaternary structure, homodimer. Mg(2+) is required as a cofactor.

Its subcellular location is the cytoplasm. The enzyme catalyses tRNA(Lys) + L-lysine + ATP = L-lysyl-tRNA(Lys) + AMP + diphosphate. This chain is Lysine--tRNA ligase (lysS), found in Campylobacter jejuni subsp. jejuni serotype O:2 (strain ATCC 700819 / NCTC 11168).